Here is a 248-residue protein sequence, read N- to C-terminus: Conoporin-Cn1 (248 aa).

A signal peptide spans 1 to 23 (MGVQFPALKTMVTVFLLLMGNMS). The interval 45 to 64 (TPGSSLYGVALKDLADTSYN) is N-terminal region. The phosphocholine site is built by Gly-120, Ser-138, Pro-140, Tyr-167, and Tyr-171.

It belongs to the actinoporin family. Conoidea subfamily. Octamer or nonamer in membranes. Monomer in the soluble state. 9 isoforms are detected in the injectable venom, mainly corresponding to different oxidative states. Expressed by the venom duct.

Its subcellular location is the secreted. The protein resides in the nematocyst. It localises to the target cell membrane. Pore-forming protein that forms pores of around 1 nm and causes cardiac stimulation and cytolysis. The protein is Conoporin-Cn1 of Conus consors (Singed cone).